The primary structure comprises 685 residues: DNA ligase (685 aa).

Residues 47 to 51 (DSEYD), 96 to 97 (SL), and E125 each bind NAD(+). K127 acts as the N6-AMP-lysine intermediate in catalysis. NAD(+) contacts are provided by R148, E185, K304, and K328. 4 residues coordinate Zn(2+): C422, C425, C440, and C446. The BRCT domain maps to 605–685 (ADAQPLKGQT…ALLALFAANR (81 aa)).

The protein belongs to the NAD-dependent DNA ligase family. LigA subfamily. Mg(2+) serves as cofactor. It depends on Mn(2+) as a cofactor.

It carries out the reaction NAD(+) + (deoxyribonucleotide)n-3'-hydroxyl + 5'-phospho-(deoxyribonucleotide)m = (deoxyribonucleotide)n+m + AMP + beta-nicotinamide D-nucleotide.. Functionally, DNA ligase that catalyzes the formation of phosphodiester linkages between 5'-phosphoryl and 3'-hydroxyl groups in double-stranded DNA using NAD as a coenzyme and as the energy source for the reaction. It is essential for DNA replication and repair of damaged DNA. This Shewanella sp. (strain W3-18-1) protein is DNA ligase.